The primary structure comprises 172 residues: Adenine phosphoribosyltransferase (172 aa).

It belongs to the purine/pyrimidine phosphoribosyltransferase family. Homodimer.

The protein resides in the cytoplasm. The catalysed reaction is AMP + diphosphate = 5-phospho-alpha-D-ribose 1-diphosphate + adenine. Its pathway is purine metabolism; AMP biosynthesis via salvage pathway; AMP from adenine: step 1/1. Catalyzes a salvage reaction resulting in the formation of AMP, that is energically less costly than de novo synthesis. In Prochlorococcus marinus (strain NATL2A), this protein is Adenine phosphoribosyltransferase.